The sequence spans 635 residues: MAKVIGIDLGTTNSCVAVMDGGTPKVIENSEGARTTPSIVAFTKDGERLIGQPAKRQAVTNPDNTIFAVKRLIGRRFDDPMTQKDTELVPYTITKGKNGDAWVKAGGQDYSPSQISAFTLQKMKETAEAYLGETVTQAVITVPAYFNDAQRQATKDAGQIAGLEVLRIINEPTAAALAYGLDKQDGKTIAVYDLGGGTFDISILEIGDGVFEVKSTNGDTFLGGEDFDTAVVEYLADKFKAKEGMDLKTDKLALQRLKEAAEKAKIELSSAQTTEINLPFITARMEGGATTPLHLVETVTRADLEKLVAGLIQRTLDPCKKALADAGISAKEIDDVVLVGGMTRMPKVREVVKDFFGKEPHTGVNPDEVVAMGAAIQAGVLQGDVKDVLLLDVTPLSLGIETLGGIMTKMIDRNTTIPTKKSQVYSTAEDNQQAVTIRVFQGEREMAQDNKLLGQFDLVGIPPARRGVPQIEVTFDIDANGIVNVSAKDKGTGKEQQIRIQASGGLSDADIDQMVRDAEKFAEEDKKRRAAAEAKNNAESLIHATERQLEENGDKVDAGLKAEIEAAIAEAKTAVESGDIDAMNAKAQALTDKAMKMGQAIYEKEQATAASPGAEAPKADDDVVDAEFSEVDENK.

T198 is subject to Phosphothreonine; by autocatalysis. The disordered stretch occupies residues 606–635 (QATAASPGAEAPKADDDVVDAEFSEVDENK). The segment covering 622–635 (DVVDAEFSEVDENK) has biased composition (acidic residues).

This sequence belongs to the heat shock protein 70 family.

In terms of biological role, acts as a chaperone. This chain is Chaperone protein DnaK, found in Novosphingobium aromaticivorans (strain ATCC 700278 / DSM 12444 / CCUG 56034 / CIP 105152 / NBRC 16084 / F199).